The sequence spans 181 residues: UPF0200 protein Ta0179 (181 aa).

Position 6–13 (6–13) interacts with ATP; it reads GMPGAGKD.

Belongs to the UPF0200 family.

The polypeptide is UPF0200 protein Ta0179 (Thermoplasma acidophilum (strain ATCC 25905 / DSM 1728 / JCM 9062 / NBRC 15155 / AMRC-C165)).